The following is a 66-amino-acid chain: Large ribosomal subunit protein bL35 (66 aa).

Residues 20-40 (GKIKSTQSAKRHGMTKRSKRS) are disordered. Over residues 28–40 (AKRHGMTKRSKRS) the composition is skewed to basic residues.

It belongs to the bacterial ribosomal protein bL35 family.

In Ehrlichia chaffeensis (strain ATCC CRL-10679 / Arkansas), this protein is Large ribosomal subunit protein bL35.